Reading from the N-terminus, the 89-residue chain is Defensin-like protein 147 (89 aa).

An N-terminal signal peptide occupies residues 1–24 (MKKIFQLSFTVFIIFISLVLGVVG). Disulfide bonds link cysteine 34/cysteine 82, cysteine 46/cysteine 66, cysteine 51/cysteine 79, and cysteine 55/cysteine 81.

It belongs to the DEFL family. As to expression, expressed in flower buds, but not in stems, roots or rosette leaves.

It is found in the secreted. The polypeptide is Defensin-like protein 147 (LCR1) (Arabidopsis thaliana (Mouse-ear cress)).